A 252-amino-acid chain; its full sequence is tRNA (guanine-N(1)-)-methyltransferase (252 aa).

S-adenosyl-L-methionine is bound by residues Gly110 and 130–135; that span reads VGDFVL.

The protein belongs to the RNA methyltransferase TrmD family. As to quaternary structure, homodimer.

It localises to the cytoplasm. It catalyses the reaction guanosine(37) in tRNA + S-adenosyl-L-methionine = N(1)-methylguanosine(37) in tRNA + S-adenosyl-L-homocysteine + H(+). Its function is as follows. Specifically methylates guanosine-37 in various tRNAs. The polypeptide is tRNA (guanine-N(1)-)-methyltransferase (Magnetococcus marinus (strain ATCC BAA-1437 / JCM 17883 / MC-1)).